Reading from the N-terminus, the 40-residue chain is Metallothionein-1 (40 aa).

This sequence belongs to the metallothionein superfamily. Type 5 family.

In terms of biological role, this protein binds cations of several transition elements. It is thought to be involved in detoxification processes. The polypeptide is Metallothionein-1 (MtnA) (Drosophila melanogaster (Fruit fly)).